A 406-amino-acid chain; its full sequence is uncharacterized protein (406 aa).

Helical transmembrane passes span 7 to 27 (LCTN…YYLF), 31 to 51 (YFNI…YGSV), 65 to 85 (LIFI…SEII), 92 to 112 (IFYF…SFIL), and 191 to 211 (ISLI…SSFF). Positions 259–331 (TLNVPISTNN…TGTNNNVVDN (73 aa)) are disordered. The span at 262–291 (VPISTNNTDNLNSVKTNQQFNTPVAKSNTK) shows a compositional bias: polar residues. Residues 292–303 (SNRRKKTGKKIR) show a composition bias toward basic residues. Over residues 306–318 (NQTTSSNSSNNQS) the composition is skewed to low complexity. Polar residues predominate over residues 319 to 330 (PESTGTNNNVVD).

It is found in the membrane. This is an uncharacterized protein from Acanthamoeba polyphaga (Amoeba).